Here is a 373-residue protein sequence, read N- to C-terminus: Indole glucosinolate O-methyltransferase 1 (373 aa).

5 residues coordinate S-adenosyl-L-homocysteine: Gly217, Asp240, Asp260, Met261, and Lys274. His278 functions as the Proton acceptor in the catalytic mechanism.

Belongs to the class I-like SAM-binding methyltransferase superfamily. Cation-independent O-methyltransferase family. Interacts with B'GAMMA.

It participates in secondary metabolite biosynthesis. In terms of biological role, involved in indole glucosinolate biosynthesis. Catalyzes methoxylation reactions of the glucosinolate indole ring. Converts the hydroxy intermediates 4-hydroxy-indol-3-yl-methylglucosinolate (4OH-I3M) and 1-hydroxy-indol-3-yl-methylglucosinolate (1OH-I3M) to 4-methoxy-indol-3-yl-methylglucosinolate (4MO-I3M) and 1-methoxy-indol-3-yl-methylglucosinolate (1MO-I3M), respectively. This Arabidopsis thaliana (Mouse-ear cress) protein is Indole glucosinolate O-methyltransferase 1.